We begin with the raw amino-acid sequence, 254 residues long: Fluoride-specific ion channel FluC 1 (254 aa).

A run of 3 helical transmembrane segments spans residues 19–39 (LDIL…TALY), 51–71 (IIGM…YGSV), and 80–100 (AFLI…VAVL). Positions 58 and 61 each coordinate Na(+).

It belongs to the fluoride channel Fluc/FEX (TC 1.A.43) family.

It localises to the cell inner membrane. The catalysed reaction is fluoride(in) = fluoride(out). With respect to regulation, na(+) is not transported, but it plays an essential structural role and its presence is essential for fluoride channel function. In terms of biological role, fluoride-specific ion channel. Important for reducing fluoride concentration in the cell, thus reducing its toxicity. This Brucella suis biovar 1 (strain 1330) protein is Fluoride-specific ion channel FluC 1.